The chain runs to 122 residues: Large ribosomal subunit protein uL14 (122 aa).

The protein belongs to the universal ribosomal protein uL14 family. As to quaternary structure, part of the 50S ribosomal subunit. Forms a cluster with proteins L3 and L19. In the 70S ribosome, L14 and L19 interact and together make contacts with the 16S rRNA in bridges B5 and B8.

Functionally, binds to 23S rRNA. Forms part of two intersubunit bridges in the 70S ribosome. The sequence is that of Large ribosomal subunit protein uL14 from Rhodospirillum centenum (strain ATCC 51521 / SW).